We begin with the raw amino-acid sequence, 310 residues long: Haloalkane dehalogenase (310 aa).

The AB hydrolase-1 domain occupies 30-140 (PVVLFLHGNP…PMPTWQDFHH (111 aa)). D103 (nucleophile) is an active-site residue. E127 (proton donor) is an active-site residue. H280 serves as the catalytic Proton acceptor.

The protein belongs to the haloalkane dehalogenase family. Type 2 subfamily. In terms of assembly, monomer.

The catalysed reaction is 1-haloalkane + H2O = a halide anion + a primary alcohol + H(+). Catalyzes hydrolytic cleavage of carbon-halogen bonds in halogenated aliphatic compounds, leading to the formation of the corresponding primary alcohols, halide ions and protons. The chain is Haloalkane dehalogenase from Bradyrhizobium diazoefficiens (strain JCM 10833 / BCRC 13528 / IAM 13628 / NBRC 14792 / USDA 110).